We begin with the raw amino-acid sequence, 368 residues long: Phosphate acyltransferase (368 aa).

The tract at residues 337 to 368 (LGEGEHNAGGAGHASPAAGHHAEPSAAQSSKA) is disordered. Low complexity predominate over residues 349-368 (HASPAAGHHAEPSAAQSSKA).

This sequence belongs to the PlsX family. As to quaternary structure, homodimer. Probably interacts with PlsY.

It is found in the cytoplasm. It carries out the reaction a fatty acyl-[ACP] + phosphate = an acyl phosphate + holo-[ACP]. It functions in the pathway lipid metabolism; phospholipid metabolism. Its function is as follows. Catalyzes the reversible formation of acyl-phosphate (acyl-PO(4)) from acyl-[acyl-carrier-protein] (acyl-ACP). This enzyme utilizes acyl-ACP as fatty acyl donor, but not acyl-CoA. In Burkholderia lata (strain ATCC 17760 / DSM 23089 / LMG 22485 / NCIMB 9086 / R18194 / 383), this protein is Phosphate acyltransferase.